Reading from the N-terminus, the 366-residue chain is sn-glycerol-3-phosphate import ATP-binding protein UgpC (366 aa).

The ABC transporter domain occupies 4–235 (VTLRNVRKTY…PASTFVASFI (232 aa)). Residue 37–44 (GPSGCGKS) coordinates ATP.

It belongs to the ABC transporter superfamily. sn-glycerol-3-phosphate importer (TC 3.A.1.1.3) family. In terms of assembly, the complex is composed of two ATP-binding proteins (UgpC), two transmembrane proteins (UgpA and UgpE) and a solute-binding protein (UgpB).

It localises to the cell inner membrane. The catalysed reaction is sn-glycerol 3-phosphate(out) + ATP + H2O = sn-glycerol 3-phosphate(in) + ADP + phosphate + H(+). Functionally, part of the ABC transporter complex UgpBAEC involved in sn-glycerol-3-phosphate (G3P) import. Responsible for energy coupling to the transport system. The protein is sn-glycerol-3-phosphate import ATP-binding protein UgpC of Rhodopseudomonas palustris (strain BisB18).